We begin with the raw amino-acid sequence, 323 residues long: Biotin synthase (323 aa).

In terms of domain architecture, Radical SAM core spans 46–264 (TEIQLSSLLS…IAVARITMPR (219 aa)). 3 residues coordinate [4Fe-4S] cluster: Cys61, Cys65, and Cys68. Positions 105, 136, 196, and 268 each coordinate [2Fe-2S] cluster.

It belongs to the radical SAM superfamily. Biotin synthase family. In terms of assembly, homodimer. [4Fe-4S] cluster is required as a cofactor. The cofactor is [2Fe-2S] cluster.

It carries out the reaction (4R,5S)-dethiobiotin + (sulfur carrier)-SH + 2 reduced [2Fe-2S]-[ferredoxin] + 2 S-adenosyl-L-methionine = (sulfur carrier)-H + biotin + 2 5'-deoxyadenosine + 2 L-methionine + 2 oxidized [2Fe-2S]-[ferredoxin]. It functions in the pathway cofactor biosynthesis; biotin biosynthesis; biotin from 7,8-diaminononanoate: step 2/2. Its function is as follows. Catalyzes the conversion of dethiobiotin (DTB) to biotin by the insertion of a sulfur atom into dethiobiotin via a radical-based mechanism. The polypeptide is Biotin synthase (Bordetella avium (strain 197N)).